Here is a 355-residue protein sequence, read N- to C-terminus: Uroporphyrinogen decarboxylase (355 aa).

Substrate is bound by residues 27–31 (RQAGR), aspartate 77, tyrosine 154, threonine 209, and histidine 328.

The protein belongs to the uroporphyrinogen decarboxylase family. Homodimer.

It is found in the cytoplasm. It catalyses the reaction uroporphyrinogen III + 4 H(+) = coproporphyrinogen III + 4 CO2. Its pathway is porphyrin-containing compound metabolism; protoporphyrin-IX biosynthesis; coproporphyrinogen-III from 5-aminolevulinate: step 4/4. Functionally, catalyzes the decarboxylation of four acetate groups of uroporphyrinogen-III to yield coproporphyrinogen-III. This is Uroporphyrinogen decarboxylase from Aliivibrio salmonicida (strain LFI1238) (Vibrio salmonicida (strain LFI1238)).